We begin with the raw amino-acid sequence, 319 residues long: Extracellular phospholipase A1 (319 aa).

The N-terminal stretch at 1–24 (MSMPLSFTSAVSPVAAIPTPRAAA) is a signal peptide.

The enzyme catalyses a 1,2-diacyl-sn-glycero-3-phosphocholine + H2O = a 2-acyl-sn-glycero-3-phosphocholine + a fatty acid + H(+). The sequence is that of Extracellular phospholipase A1 (phlA) from Serratia liquefaciens.